We begin with the raw amino-acid sequence, 142 residues long: Transcription antitermination protein NusB (142 aa).

The protein belongs to the NusB family.

Involved in transcription antitermination. Required for transcription of ribosomal RNA (rRNA) genes. Binds specifically to the boxA antiterminator sequence of the ribosomal RNA (rrn) operons. This is Transcription antitermination protein NusB from Latilactobacillus sakei subsp. sakei (strain 23K) (Lactobacillus sakei subsp. sakei).